Reading from the N-terminus, the 477-residue chain is Glycogen synthase (477 aa).

Lys15 is a binding site for ADP-alpha-D-glucose.

Belongs to the glycosyltransferase 1 family. Bacterial/plant glycogen synthase subfamily.

It carries out the reaction [(1-&gt;4)-alpha-D-glucosyl](n) + ADP-alpha-D-glucose = [(1-&gt;4)-alpha-D-glucosyl](n+1) + ADP + H(+). It functions in the pathway glycan biosynthesis; glycogen biosynthesis. Functionally, synthesizes alpha-1,4-glucan chains using ADP-glucose. This chain is Glycogen synthase, found in Caldicellulosiruptor saccharolyticus (strain ATCC 43494 / DSM 8903 / Tp8T 6331).